The primary structure comprises 404 residues: MSKSLIVSSPGKTILFGEHAVVYGATALAAAVSLRSYCKLQTTNNNEIVIVMSDIGTERRWNLQSLPWQHVTVENVQHPASSPNLDLLQGLGELLKNEENGLIHSAMLCTLYLFTSLSSPSQGCTLTISSQVPLGAGLGSSATISVVVATSLLLAFGNIEPPSSNSLQNNKALALIEAWSFLGECCIHGTPSGIDNAVATNGGLIAFRKATAHQSAMKEFLKPKDTLSVMITDTKQPKSTKKLVQGVFELKERLPTVIDSIIDAIDGISKSAVLALTSESDKNSSAKKLGEFIVLNQKLLECLGVSHYSIDRVLQATKSIGWTKLTGAGGGGCTITLLTPECKEEEFKLCKESLLAHKNSIYDVQLGGPGVSVVTDSDSFFPQYESDFDFKKLNLLSKFNKYYI.

ATP is bound by residues Lys-12, Ser-130, and 135–141 (GAGLGSS). Mg(2+)-binding residues include Ser-141 and Glu-184. Asp-195 functions as the Proton acceptor in the catalytic mechanism.

It belongs to the GHMP kinase family. Mevalonate kinase subfamily. In terms of assembly, homodimer. Requires Mg(2+) as cofactor.

The protein resides in the cytoplasm. It is found in the nucleus. It carries out the reaction (R)-mevalonate + ATP = (R)-5-phosphomevalonate + ADP + H(+). It participates in isoprenoid biosynthesis; isopentenyl diphosphate biosynthesis via mevalonate pathway; isopentenyl diphosphate from (R)-mevalonate: step 1/3. With respect to regulation, farnesyl pyrophosphate and geranyl pyrophosphate inhibit mevalonate kinase by binding competitively at the ATP-binding site. Functionally, mevalonate kinase; part of the second module of ergosterol biosynthesis pathway that includes the middle steps of the pathway. Erg12 converts mevalonate into 5-phosphomevalonate. The second module is carried out in the vacuole and involves the formation of farnesyl diphosphate, which is also an important intermediate in the biosynthesis of ubiquinone, dolichol, heme and prenylated proteins. Activity by the mevalonate kinase erg12 first converts mevalonate into 5-phosphomevalonate. 5-phosphomevalonate is then further converted to 5-diphosphomevalonate by the phosphomevalonate kinase erg8. The diphosphomevalonate decarboxylase mvd1 then produces isopentenyl diphosphate. The isopentenyl-diphosphate delta-isomerase idi1 then catalyzes the 1,3-allylic rearrangement of the homoallylic substrate isopentenyl (IPP) to its highly electrophilic allylic isomer, dimethylallyl diphosphate (DMAPP). Finally the farnesyl diphosphate synthase fps1 catalyzes the sequential condensation of isopentenyl pyrophosphate with dimethylallyl pyrophosphate, and then with the resultant geranylpyrophosphate to the ultimate product farnesyl pyrophosphate. This Schizosaccharomyces pombe (strain 972 / ATCC 24843) (Fission yeast) protein is Mevalonate kinase (erg12).